Here is a 288-residue protein sequence, read N- to C-terminus: UTP--glucose-1-phosphate uridylyltransferase (288 aa).

The protein belongs to the UDPGP type 2 family.

It carries out the reaction alpha-D-glucose 1-phosphate + UTP + H(+) = UDP-alpha-D-glucose + diphosphate. It participates in glycolipid metabolism; diglucosyl-diacylglycerol biosynthesis. Its function is as follows. Catalyzes the formation of UDP-glucose from glucose-1-phosphate and UTP. This is an intermediate step in the biosynthesis of diglucosyl-diacylglycerol (Glc2-DAG), i.e. a glycolipid found in the membrane, which is also used as a membrane anchor for lipoteichoic acid (LTA). The chain is UTP--glucose-1-phosphate uridylyltransferase (gtaB) from Staphylococcus epidermidis (strain ATCC 35984 / DSM 28319 / BCRC 17069 / CCUG 31568 / BM 3577 / RP62A).